A 433-amino-acid chain; its full sequence is UPF0597 protein Spea_0809 (433 aa).

It belongs to the UPF0597 family.

This is UPF0597 protein Spea_0809 from Shewanella pealeana (strain ATCC 700345 / ANG-SQ1).